Reading from the N-terminus, the 206-residue chain is 2,3-bisphosphoglycerate-dependent phosphoglycerate mutase (206 aa).

Substrate is bound by residues 9–16 (RHGQSEWN), 22–23 (TG), arginine 61, 88–91 (ERDY), lysine 99, 115–116 (RR), and 159–160 (GN). Catalysis depends on histidine 10, which acts as the Tele-phosphohistidine intermediate. The active-site Proton donor/acceptor is the glutamate 88.

This sequence belongs to the phosphoglycerate mutase family. BPG-dependent PGAM subfamily. Homodimer.

It carries out the reaction (2R)-2-phosphoglycerate = (2R)-3-phosphoglycerate. It participates in carbohydrate degradation; glycolysis; pyruvate from D-glyceraldehyde 3-phosphate: step 3/5. In terms of biological role, catalyzes the interconversion of 2-phosphoglycerate and 3-phosphoglycerate. In Bartonella bacilliformis (strain ATCC 35685 / KC583 / Herrer 020/F12,63), this protein is 2,3-bisphosphoglycerate-dependent phosphoglycerate mutase.